Here is a 315-residue protein sequence, read N- to C-terminus: Zinc finger CCCH domain-containing protein 23 (315 aa).

Residues 1–21 (MMIGENKNRPHPTIHIPQWDQ) form a disordered region. 2 C3H1-type zinc fingers span residues 131-157 (YSGTACPEFRKGSCRRGDSCEFSHGVF) and 165-189 (RYRTQPCKDGTSCRRRICFFAHTTE).

This is Zinc finger CCCH domain-containing protein 23 from Arabidopsis thaliana (Mouse-ear cress).